A 242-amino-acid chain; its full sequence is 1-(5-phosphoribosyl)-5-[(5-phosphoribosylamino)methylideneamino] imidazole-4-carboxamide isomerase (242 aa).

Residue Asp-8 is the Proton acceptor of the active site. Residue Asp-129 is the Proton donor of the active site.

The protein belongs to the HisA/HisF family.

The protein resides in the cytoplasm. The enzyme catalyses 1-(5-phospho-beta-D-ribosyl)-5-[(5-phospho-beta-D-ribosylamino)methylideneamino]imidazole-4-carboxamide = 5-[(5-phospho-1-deoxy-D-ribulos-1-ylimino)methylamino]-1-(5-phospho-beta-D-ribosyl)imidazole-4-carboxamide. It functions in the pathway amino-acid biosynthesis; L-histidine biosynthesis; L-histidine from 5-phospho-alpha-D-ribose 1-diphosphate: step 4/9. In Dictyoglomus thermophilum (strain ATCC 35947 / DSM 3960 / H-6-12), this protein is 1-(5-phosphoribosyl)-5-[(5-phosphoribosylamino)methylideneamino] imidazole-4-carboxamide isomerase.